The chain runs to 294 residues: Decaprenyl-diphosphate synthase subunit 2 (294 aa).

Belongs to the FPP/GGPP synthase family. As to quaternary structure, heterotetramer of 2 dps1 and 2 dlp1 subunits.

The protein localises to the mitochondrion. It catalyses the reaction 7 isopentenyl diphosphate + (2E,6E)-farnesyl diphosphate = all-trans-decaprenyl diphosphate + 7 diphosphate. It participates in cofactor biosynthesis; ubiquinone biosynthesis. In terms of biological role, supplies decaprenyl diphosphate, the precursor for the side chain of the isoprenoid quinones ubiquinone-10. The sequence is that of Decaprenyl-diphosphate synthase subunit 2 (dlp1) from Schizosaccharomyces pombe (strain 972 / ATCC 24843) (Fission yeast).